The following is a 150-amino-acid chain: uncharacterized protein (150 aa).

A run of 3 helical transmembrane segments spans residues 50–70 (VVSV…VIHL), 80–100 (LYIT…QLWL), and 127–147 (KVVI…FFIE).

The protein localises to the membrane. This is an uncharacterized protein from Schizosaccharomyces pombe (strain 972 / ATCC 24843) (Fission yeast).